The sequence spans 331 residues: Phosphoribosylformylglycinamidine cyclo-ligase (331 aa).

It belongs to the AIR synthase family.

Its subcellular location is the cytoplasm. It carries out the reaction 2-formamido-N(1)-(5-O-phospho-beta-D-ribosyl)acetamidine + ATP = 5-amino-1-(5-phospho-beta-D-ribosyl)imidazole + ADP + phosphate + H(+). Its pathway is purine metabolism; IMP biosynthesis via de novo pathway; 5-amino-1-(5-phospho-D-ribosyl)imidazole from N(2)-formyl-N(1)-(5-phospho-D-ribosyl)glycinamide: step 2/2. This is Phosphoribosylformylglycinamidine cyclo-ligase from Clostridium kluyveri (strain NBRC 12016).